We begin with the raw amino-acid sequence, 275 residues long: 6-deoxy-6-sulfo-D-fructose transketolase subunit SqwG (275 aa).

The protein belongs to the transketolase family. As to quaternary structure, forms a complex with SqwH. Thiamine diphosphate is required as a cofactor.

The enzyme catalyses 6-deoxy-6-sulfo-D-fructose + D-glyceraldehyde 3-phosphate = 4-deoxy-4-sulfo-D-erythrose + D-xylulose 5-phosphate. The catalysed reaction is 4-deoxy-4-sulfo-D-erythrulose + D-glyceraldehyde 3-phosphate = sulfoacetaldehyde + D-xylulose 5-phosphate. Part of the sulfo-TK pathway, a D-sulfoquinovose degradation pathway that produces 2-hydroxyethane-1-sulfonate (isethionate). Catalyzes two steps of the pathway: the formation of 4-deoxy-4-sulfoerythrose (SE) and xylulose 5-phosphate from 6-deoxy-6-sulfo-D-fructose (SF) and glyceraldehyde 3-phosphate, and the formation of sulfoacetaldehyde (SA) and xylulose 5-phosphate from 4-deoxy-4-sulfo-D-erythrulose (SEu) and glyceraldehyde 3-phosphate. In Clostridium sp. (strain MSTE9), this protein is 6-deoxy-6-sulfo-D-fructose transketolase subunit SqwG.